The following is a 513-amino-acid chain: GMP synthase [glutamine-hydrolyzing] (513 aa).

The Glutamine amidotransferase type-1 domain occupies 8–198; the sequence is MILVLDFGSQ…VFGVCDCEGK (191 aa). Catalysis depends on cysteine 85, which acts as the Nucleophile. Active-site residues include histidine 172 and glutamate 174. One can recognise a GMPS ATP-PPase domain in the interval 199–388; it reads WSMENFIEIE…LGLPDDIVWR (190 aa). An ATP-binding site is contributed by 226-232; that stretch reads SGGVDSS.

In terms of assembly, homodimer.

The enzyme catalyses XMP + L-glutamine + ATP + H2O = GMP + L-glutamate + AMP + diphosphate + 2 H(+). It participates in purine metabolism; GMP biosynthesis; GMP from XMP (L-Gln route): step 1/1. In terms of biological role, catalyzes the synthesis of GMP from XMP. The protein is GMP synthase [glutamine-hydrolyzing] of Bacillus velezensis (strain DSM 23117 / BGSC 10A6 / LMG 26770 / FZB42) (Bacillus amyloliquefaciens subsp. plantarum).